Reading from the N-terminus, the 87-residue chain is MNSLLMITACLVLFGTVWAKEGYLVNKSTGCKYGCFWLGKNENCDMECKAKNQGGSYGYCYSFACWCEGLPDSTPTYPLPNKSCSKK.

An N-terminal signal peptide occupies residues 1 to 19; the sequence is MNSLLMITACLVLFGTVWA. The region spanning 20–85 is the LCN-type CS-alpha/beta domain; sequence KEGYLVNKST…TYPLPNKSCS (66 aa). 4 disulfide bridges follow: Cys31–Cys84, Cys35–Cys60, Cys44–Cys65, and Cys48–Cys67. The propeptide at 86 to 87 is removed by a carboxypeptidase; the sequence is KK.

Belongs to the long (4 C-C) scorpion toxin superfamily. Sodium channel inhibitor family. Beta subfamily. As to expression, expressed by the venom gland.

It localises to the secreted. Functionally, beta toxins bind voltage-independently at site-4 of sodium channels (Nav) and shift the voltage of activation toward more negative potentials thereby affecting sodium channel activation and promoting spontaneous and repetitive firing. This chain is Toxin Cll5c, found in Centruroides limpidus (Mexican scorpion).